Consider the following 103-residue polypeptide: Small ribosomal subunit protein uS10 (103 aa).

The protein belongs to the universal ribosomal protein uS10 family. As to quaternary structure, part of the 30S ribosomal subunit.

In terms of biological role, involved in the binding of tRNA to the ribosomes. In Dechloromonas aromatica (strain RCB), this protein is Small ribosomal subunit protein uS10.